The primary structure comprises 1704 residues: Phospholipid-transporting ATPase ABCA3 (1704 aa).

N-linked (GlcNAc...) asparagine glycosylation occurs at asparagine 14. A helical transmembrane segment spans residues 22–42; it reads VLVTVLELFLPLLFSGILIWL. N-linked (GlcNAc...) asparagine glycans are attached at residues asparagine 53, asparagine 124, and asparagine 140. The next 6 membrane-spanning stretches (helical) occupy residues 261–283, 307–327, 344–364, 373–393, 405–425, and 447–467; these read YQLPLLLLLSFTYTALTIARAVV, AWFLLFFLFLLIAASFMTLLF, SLVLAFLLCFAISTISFSFMV, MAAAFGGFLYFFTYIPYFFVA, LCSCLLSNVAMAMGAQLIGKF, and FCFGQVLGMLLLDSVLYGLVT. Residues 530 to 763 form the ABC transporter 1 domain; sequence IKIKHLSKVF…YGAGYHMTLV (234 aa). 566 to 573 contacts ATP; that stretch reads GHNGAGKT. 2 N-linked (GlcNAc...) asparagine glycosylation sites follow: asparagine 620 and asparagine 783. 7 helical membrane-spanning segments follow: residues 925–945, 1100–1120, 1144–1164, 1183–1203, 1213–1233, 1245–1265, and 1306–1326; these read MVAAQVLVPLTCVTLALLAIN, IALNLLFAMAFLASTFSILAV, SALLWDLISFLIPSLLLLVVF, LLLLLYGWAIIPLMYLMNFFF, LTIFNILSGIATFLMVTIMRI, LDHVFLVLPNHCLGMAVSSFY, and FVASMAASGCAYLILLFLIET. The region spanning 1381-1614 is the ABC transporter 2 domain; sequence LIIKELSKVY…FGSGYSLRAK (234 aa). 1416–1423 provides a ligand contact to ATP; that stretch reads GFNGAGKT.

The protein belongs to the ABC transporter superfamily. ABCA family. In terms of assembly, homooligomer; disulfide-linked. N-glycosylated. Localization at intracellular vesicles is accompanied by processing of oligosaccharide from high mannose type to complex type. N-linked glycosylation at Asn-124 and Asn-140 is required for stability and efficient anterograde trafficking and prevents from proteasomal degradation. Post-translationally, proteolytically cleaved by CTSL and to a lower extent by CTSB within multivesicular bodies (MVB) and lamellar bodies (LB) leading to a mature form of 150 kDa. In terms of tissue distribution, expressed in brain, pancreas, skeletal muscle and heart. Highly expressed in the lung in an AT2-cell-specific manner. Weakly expressed in placenta, kidney and liver. Also expressed in medullary thyroid carcinoma cells (MTC) and in C-cell carcinoma.

Its subcellular location is the endosome. The protein resides in the multivesicular body membrane. It localises to the cytoplasmic vesicle membrane. The protein localises to the late endosome membrane. It is found in the lysosome membrane. The enzyme catalyses ATP + H2O + xenobioticSide 1 = ADP + phosphate + xenobioticSide 2.. It carries out the reaction a 1,2-diacyl-sn-glycero-3-phosphocholine(in) + ATP + H2O = a 1,2-diacyl-sn-glycero-3-phosphocholine(out) + ADP + phosphate + H(+). The catalysed reaction is ATP + H2O + phospholipidSide 1 = ADP + phosphate + phospholipidSide 2.. It catalyses the reaction 1,2-dihexadecanoyl-sn-glycero-3-phosphocholine(in) + ATP + H2O = 1,2-dihexadecanoyl-sn-glycero-3-phosphocholine(out) + ADP + phosphate + H(+). The enzyme catalyses cholesterol(in) + ATP + H2O = cholesterol(out) + ADP + phosphate + H(+). It carries out the reaction a 1,2-diacyl-sn-glycero-3-phospho-(1'-sn-glycerol)(in) + ATP + H2O = a 1,2-diacyl-sn-glycero-3-phospho-(1'-sn-glycerol)(out) + ADP + phosphate + H(+). With respect to regulation, the ATP-dependent phosphatidylcholine transport is competitively inhibited by miltefosine. Catalyzes the ATP-dependent transport of phospholipids such as phosphatidylcholine and phosphoglycerol from the cytoplasm into the lumen side of lamellar bodies, in turn participates in the lamellar bodies biogenesis and homeostasis of pulmonary surfactant. Transports preferentially phosphatidylcholine containing short acyl chains. In addition plays a role as an efflux transporter of miltefosine across macrophage membranes and free cholesterol (FC) through intralumenal vesicles by removing FC from the cell as a component of surfactant and protects cells from free cholesterol toxicity. This Homo sapiens (Human) protein is Phospholipid-transporting ATPase ABCA3.